Consider the following 386-residue polypeptide: L-lactate oxidase (386 aa).

In terms of domain architecture, FMN hydroxy acid dehydrogenase spans 16–382 (AQAPFPICFA…RTITLVKNDG (367 aa)). Residue Tyr-42 participates in pyruvate binding. FMN contacts are provided by residues 95 to 97 (PVG), Ser-124, and Gln-146. Tyr-148 provides a ligand contact to pyruvate. Thr-174 contributes to the FMN binding site. Residue Arg-183 coordinates pyruvate. Lys-253 and Ser-275 together coordinate FMN. His-277 and Arg-280 together coordinate pyruvate. His-277 (proton acceptor) is an active-site residue. FMN contacts are provided by residues 308 to 312 (DSGVY) and Arg-332.

Belongs to the FMN-dependent alpha-hydroxy acid dehydrogenase family. As to quaternary structure, homotetramer. FMN is required as a cofactor.

It catalyses the reaction a (2S)-2-hydroxycarboxylate + O2 = a 2-oxocarboxylate + H2O2. It carries out the reaction (S)-lactate + O2 = pyruvate + H2O2. The enzyme catalyses 2-hydroxyoctanoate + O2 = 2-oxooctanoate + H2O2. The catalysed reaction is mandelate + O2 = phenylglyoxylate + H2O2. It catalyses the reaction 2-hydroxyoctadecanoate + O2 = 2-oxooctadecanoate + H2O2. It carries out the reaction (S)-2-hydroxyglutarate + O2 = H2O2 + 2-oxoglutarate. Functionally, oxidase that catalyzes the oxidation of a broad range of 2-hydroxyacids in vitro, such as (S)-lactate, 2-hydroxyoctanoate, mandelate, 2-hydroxyoctadecanoate and (S)-2-hydroxyglutarate, to the corresponding 2-oxoacids, with a reduction of O2 to H2O2. May be involved in the utilization of L-lactate as an energy source for growth. The sequence is that of L-lactate oxidase from Lysinibacillus sphaericus (strain C3-41).